The chain runs to 508 residues: Cobyric acid synthase (508 aa).

In terms of domain architecture, GATase cobBQ-type spans 255–454; it reads ELNIAVLKLP…LHGVFESGPW (200 aa). The active-site Nucleophile is C336. The active site involves H446.

It belongs to the CobB/CobQ family. CobQ subfamily.

Its pathway is cofactor biosynthesis; adenosylcobalamin biosynthesis. Functionally, catalyzes amidations at positions B, D, E, and G on adenosylcobyrinic A,C-diamide. NH(2) groups are provided by glutamine, and one molecule of ATP is hydrogenolyzed for each amidation. This chain is Cobyric acid synthase, found in Synechococcus sp. (strain CC9311).